Consider the following 477-residue polypeptide: Stromelysin-1 (477 aa).

The N-terminal stretch at 1 to 17 is a signal peptide; that stretch reads MKSLPILLLLCVAVCSA. A propeptide spans 18–99 (activation peptide); it reads YPLDGAARGE…PRCGVPDVGH (82 aa). Residues 90–97 carry the Cysteine switch motif; it reads PRCGVPDV. Cys-92 lines the Zn(2+) pocket. The Ca(2+) site is built by Asp-124 and Asp-158. Residues His-168 and Asp-170 each contribute to the Zn(2+) site. Residues Asp-175, Gly-176, Gly-178, and Val-180 each coordinate Ca(2+). His-183 contributes to the Zn(2+) binding site. Gly-190, Asn-192, and Asp-194 together coordinate Ca(2+). His-196 serves as a coordination point for Zn(2+). Ca(2+) is bound by residues Asp-198, Asp-199, and Glu-201. Position 218 (His-218) interacts with Zn(2+). The active site involves Glu-219. Zn(2+) contacts are provided by His-222 and His-228. Positions 262–287 are disordered; the sequence is LYGPPPDSPETPLVPTEPVPPEPGTP. Residues 276–285 are compositionally biased toward pro residues; the sequence is PTEPVPPEPG. Hemopexin repeat units lie at residues 287 to 336, 337 to 383, 385 to 433, and 434 to 477; these read PANC…WPSL, PSGV…GFPP, VRKI…FPGI, and DSKI…WLNC. A disulfide bridge links Cys-290 with Cys-477. Ca(2+) is bound at residue Asp-297. 2 residues coordinate Ca(2+): Asp-389 and Asp-438.

The protein belongs to the peptidase M10A family. Ca(2+) serves as cofactor. It depends on Zn(2+) as a cofactor. In terms of processing, directly cleaved by HTRA2 to produce active form.

It localises to the secreted. The protein localises to the extracellular space. Its subcellular location is the extracellular matrix. It is found in the nucleus. The protein resides in the cytoplasm. The catalysed reaction is Preferential cleavage where P1', P2' and P3' are hydrophobic residues.. Enzymatic activity is activated by HTRA2 in dopaminergic cells upon mitochondrial stress. In terms of biological role, metalloproteinase with a rather broad substrate specificity that can degrade fibronectin, laminin, gelatins of type I, III, IV, and V; collagens III, IV, X, and IX, and cartilage proteoglycans. Activates different molecules including growth factors, plasminogen or other matrix metalloproteinases such as MMP9. Once released into the extracellular matrix (ECM), the inactive pro-enzyme is activated by the plasmin cascade signaling pathway. Also acts intracellularly. For example, in dopaminergic neurons, gets activated by the serine protease HTRA2 upon stress and plays a pivotal role in DA neuronal degeneration by mediating microglial activation and alpha-synuclein/SNCA cleavage. In addition, plays a role in immune response and possesses antiviral activity against various viruses such as vesicular stomatitis virus, influenza A virus (H1N1) and human herpes virus 1. Mechanistically, translocates from the cytoplasm into the cell nucleus upon virus infection to influence NF-kappa-B activities. In Homo sapiens (Human), this protein is Stromelysin-1 (MMP3).